The primary structure comprises 178 residues: Bifunctional protein PyrR (178 aa).

Substrate contacts are provided by residues 41-42 (RR), 103-111 (DDVLYTGRT), and arginine 136. The short motif at 99 to 111 (VILVDDVLYTGRT) is the PRPP-binding element.

This sequence belongs to the purine/pyrimidine phosphoribosyltransferase family. PyrR subfamily. Homodimer and homohexamer; in equilibrium.

It catalyses the reaction UMP + diphosphate = 5-phospho-alpha-D-ribose 1-diphosphate + uracil. Regulates transcriptional attenuation of the pyrimidine nucleotide (pyr) operon by binding in a uridine-dependent manner to specific sites on pyr mRNA. This disrupts an antiterminator hairpin in the RNA and favors formation of a downstream transcription terminator, leading to a reduced expression of downstream genes. Functionally, also displays a weak uracil phosphoribosyltransferase activity which is not physiologically significant. The chain is Bifunctional protein PyrR from Clostridium acetobutylicum (strain ATCC 824 / DSM 792 / JCM 1419 / IAM 19013 / LMG 5710 / NBRC 13948 / NRRL B-527 / VKM B-1787 / 2291 / W).